We begin with the raw amino-acid sequence, 353 residues long: MIRIAIDVMGGDFGPDVAIPGAAKALERHNDVTFLLYGQKSKCDPILAQYPALREKSVFHDCEVSVSMDEKPSQALRRGRYVSSMWRAIEAVKLGEADVAVSAGNTGALMAMAKFCLRTMARVERPAIAGIWPTLKGESIVLDVGATIGADSQQLLDFALMGGAMARALFDIDRPTVGLLNVGVEEVKGQEEVREAGRLIREADLGTIDYRGFVEGDDIGKGTVDVVVTEGFTGNIALKAAEGTARQITTLLREAISRSFFAKIGYILAKSAFDVLREKMDPRKVNGGVFLGLNGIVIKSHGGTDAIGFASAVDVGYDMVHNGLTAKIENDLKIYHARRLPPPAPEALVADEE.

It belongs to the PlsX family. Homodimer. Probably interacts with PlsY.

The protein resides in the cytoplasm. It catalyses the reaction a fatty acyl-[ACP] + phosphate = an acyl phosphate + holo-[ACP]. Its pathway is lipid metabolism; phospholipid metabolism. Functionally, catalyzes the reversible formation of acyl-phosphate (acyl-PO(4)) from acyl-[acyl-carrier-protein] (acyl-ACP). This enzyme utilizes acyl-ACP as fatty acyl donor, but not acyl-CoA. This Agrobacterium fabrum (strain C58 / ATCC 33970) (Agrobacterium tumefaciens (strain C58)) protein is Phosphate acyltransferase.